Consider the following 609-residue polypeptide: Replication protein A 70 kDa DNA-binding subunit (609 aa).

Positions 112–164 (IGNPHPYNDGQGPPQPAAPAPASAPPPSKPQNISAPPPPSMNRGASKLFGGGS) are disordered. Residues 124-151 (PPQPAAPAPASAPPPSKPQNISAPPPPS) show a composition bias toward pro residues. A DNA-binding region (OB) is located at residues 189 to 273 (WTVRARVTNK…VKNDYEMTFN (85 aa)). The C4-type zinc-finger motif lies at 472-494 (CPSQDCNKKVIDQQNGLFRCEKC).

Belongs to the replication factor A protein 1 family. In terms of assembly, component of the heterotrimeric canonical replication protein A complex (RPA). Interacts with rpain-a.

It is found in the nucleus. The protein resides in the PML body. Functionally, as part of the heterotrimeric replication protein A complex (RPA/RP-A), binds and stabilizes single-stranded DNA intermediates, that form during DNA replication or upon DNA stress. It prevents their reannealing and in parallel, recruits and activates different proteins and complexes involved in DNA metabolism. Thereby, it plays an essential role both in DNA replication and the cellular response to DNA damage. The chain is Replication protein A 70 kDa DNA-binding subunit (rpa1) from Xenopus tropicalis (Western clawed frog).